A 313-amino-acid chain; its full sequence is Homoserine O-succinyltransferase (313 aa).

The Acyl-thioester intermediate role is filled by Cys-142. Substrate contacts are provided by Lys-163 and Ser-192. Catalysis depends on His-235, which acts as the Proton acceptor. The active site involves Glu-237. Residue Arg-249 participates in substrate binding.

Belongs to the MetA family.

It is found in the cytoplasm. The catalysed reaction is L-homoserine + succinyl-CoA = O-succinyl-L-homoserine + CoA. It participates in amino-acid biosynthesis; L-methionine biosynthesis via de novo pathway; O-succinyl-L-homoserine from L-homoserine: step 1/1. Its function is as follows. Transfers a succinyl group from succinyl-CoA to L-homoserine, forming succinyl-L-homoserine. The polypeptide is Homoserine O-succinyltransferase (Shewanella baltica (strain OS195)).